Reading from the N-terminus, the 76-residue chain is Kappa-actitoxin-Avd4l (76 aa).

The N-terminal stretch at 1-19 (MNKALFLCLVVLCAAVVFA) is a signal peptide. The propeptide occupies 20–31 (AEDLQKAKHAPF). Intrachain disulfides connect Cys-37–Cys-72, Cys-39–Cys-65, and Cys-55–Cys-73.

This sequence belongs to the sea anemone type 3 (BDS) potassium channel toxin family. Weakly expressed in the ectodermal tissue from the distal and proximal tentacles, body wall, and oral disk.

The protein resides in the secreted. Its subcellular location is the nematocyst. Blocks Kv3 voltage-gated potassium channels. Reduces blood pressure. This chain is Kappa-actitoxin-Avd4l, found in Anemonia viridis (Snakelocks anemone).